Here is a 261-residue protein sequence, read N- to C-terminus: Tryptophan synthase alpha chain (261 aa).

Catalysis depends on proton acceptor residues glutamate 47 and aspartate 58.

The protein belongs to the TrpA family. In terms of assembly, tetramer of two alpha and two beta chains.

It carries out the reaction (1S,2R)-1-C-(indol-3-yl)glycerol 3-phosphate + L-serine = D-glyceraldehyde 3-phosphate + L-tryptophan + H2O. Its pathway is amino-acid biosynthesis; L-tryptophan biosynthesis; L-tryptophan from chorismate: step 5/5. The alpha subunit is responsible for the aldol cleavage of indoleglycerol phosphate to indole and glyceraldehyde 3-phosphate. This is Tryptophan synthase alpha chain from Neisseria meningitidis serogroup A / serotype 4A (strain DSM 15465 / Z2491).